Reading from the N-terminus, the 1097-residue chain is DNA polymerase catalytic subunit (1097 aa).

The interval 1069 to 1097 is disordered; that stretch reads RGGDDSDGGDSEKENMDTERSSSHEAMET. Over residues 1078 to 1097 the composition is skewed to basic and acidic residues; that stretch reads DSEKENMDTERSSSHEAMET.

This sequence belongs to the DNA polymerase type-B family.

The protein resides in the host nucleus. The catalysed reaction is DNA(n) + a 2'-deoxyribonucleoside 5'-triphosphate = DNA(n+1) + diphosphate. In Murid herpesvirus 1 (strain Smith) (MuHV-1), this protein is DNA polymerase catalytic subunit (UL54).